We begin with the raw amino-acid sequence, 392 residues long: Phosphopentomutase (392 aa).

Residues aspartate 14, aspartate 286, histidine 291, aspartate 327, histidine 328, and histidine 339 each coordinate Mn(2+).

It belongs to the phosphopentomutase family. Mn(2+) is required as a cofactor.

The protein resides in the cytoplasm. It carries out the reaction 2-deoxy-alpha-D-ribose 1-phosphate = 2-deoxy-D-ribose 5-phosphate. The catalysed reaction is alpha-D-ribose 1-phosphate = D-ribose 5-phosphate. Its pathway is carbohydrate degradation; 2-deoxy-D-ribose 1-phosphate degradation; D-glyceraldehyde 3-phosphate and acetaldehyde from 2-deoxy-alpha-D-ribose 1-phosphate: step 1/2. Isomerase that catalyzes the conversion of deoxy-ribose 1-phosphate (dRib-1-P) and ribose 1-phosphate (Rib-1-P) to deoxy-ribose 5-phosphate (dRib-5-P) and ribose 5-phosphate (Rib-5-P), respectively. This Staphylococcus aureus (strain Mu3 / ATCC 700698) protein is Phosphopentomutase.